Consider the following 452-residue polypeptide: uncharacterized protein (452 aa).

The next 7 helical transmembrane spans lie at 18–38 (PIIE…VLAK), 81–101 (LLPV…FLLA), 269–289 (IVLL…ALFI), 317–337 (AGQV…ATDI), 354–374 (VIIV…LPAF), 390–410 (VFVV…LTQI), and 428–448 (SYAV…LLVV).

Belongs to the auxin efflux carrier (TC 2.A.69) family.

It localises to the membrane. This is an uncharacterized protein from Schizosaccharomyces pombe (strain 972 / ATCC 24843) (Fission yeast).